Reading from the N-terminus, the 185-residue chain is Ribosome-recycling factor (185 aa).

This sequence belongs to the RRF family.

The protein resides in the cytoplasm. In terms of biological role, responsible for the release of ribosomes from messenger RNA at the termination of protein biosynthesis. May increase the efficiency of translation by recycling ribosomes from one round of translation to another. The protein is Ribosome-recycling factor of Corynebacterium glutamicum (strain R).